We begin with the raw amino-acid sequence, 423 residues long: Mannose-6-phosphate isomerase (423 aa).

Ala-2 carries the N-acetylalanine modification. Phosphoserine occurs at positions 102 and 108. Residues Gln-110, His-112, Glu-137, and His-276 each coordinate Zn(2+). Arg-295 is a catalytic residue.

Belongs to the mannose-6-phosphate isomerase type 1 family. Zn(2+) serves as cofactor.

It is found in the cytoplasm. It carries out the reaction D-mannose 6-phosphate = D-fructose 6-phosphate. It functions in the pathway nucleotide-sugar biosynthesis; GDP-alpha-D-mannose biosynthesis; alpha-D-mannose 1-phosphate from D-fructose 6-phosphate: step 1/2. In terms of biological role, isomerase that catalyzes the interconversion of fructose-6-P and mannose-6-P and has a critical role in the supply of D-mannose derivatives required for many eukaryotic glycosylation reactions. The sequence is that of Mannose-6-phosphate isomerase (MPI) from Bos taurus (Bovine).